The sequence spans 180 residues: Vacuolar ATPase assembly protein VMA22 (180 aa).

Positions 4-38 (QALREELDSKCLQLLSDLEELEAKRAALNARVEEG) form a coiled coil. The interval 90-113 (TPEEVGPSEASLRRRKGPTKTKEL) is disordered.

As to quaternary structure, accessory component of the multisubunit proton-transporting vacuolar (V)-ATPase protein pump. As to expression, predominantly expressed in the heart, liver, kidney and testis and at lower levels in the brain and lung. Undetectable in the spleen and muscles.

It localises to the endosome. Its subcellular location is the lysosome. It is found in the endoplasmic reticulum-Golgi intermediate compartment. The protein localises to the cytoplasmic vesicle. The protein resides in the COPI-coated vesicle. It localises to the endoplasmic reticulum. Functionally, accessory component of the proton-transporting vacuolar (V)-ATPase protein pump involved in intracellular iron homeostasis. In aerobic conditions, required for intracellular iron homeostasis, thus triggering the activity of Fe(2+) prolyl hydroxylase (PHD) enzymes, and leading to HIF1A hydroxylation and subsequent proteasomal degradation. Necessary for endolysosomal acidification and lysosomal degradation. May be involved in Golgi homeostasis. This Mus musculus (Mouse) protein is Vacuolar ATPase assembly protein VMA22 (Vma22).